Here is a 357-residue protein sequence, read N- to C-terminus: Meiotically up-regulated gene 135 protein (357 aa).

It belongs to the UPF0612 family.

The protein localises to the nucleus. Its function is as follows. Has a role in meiosis. This chain is Meiotically up-regulated gene 135 protein (mug135), found in Schizosaccharomyces pombe (strain 972 / ATCC 24843) (Fission yeast).